Reading from the N-terminus, the 344-residue chain is Oxygen sensor histidine kinase NreB (344 aa).

4 residues coordinate [4Fe-4S] cluster: Cys-58, Cys-61, Cys-73, and Cys-76. In terms of domain architecture, Histidine kinase spans 147-344 (ENERKRISRE…GTIITLDIPI (198 aa)). At His-158 the chain carries Phosphohistidine; by autocatalysis.

The cofactor is [4Fe-4S] cluster. Autophosphorylated.

It localises to the cytoplasm. It carries out the reaction ATP + protein L-histidine = ADP + protein N-phospho-L-histidine.. Functionally, member of the two-component regulatory system NreB/NreC involved in the control of dissimilatory nitrate/nitrite reduction in response to oxygen. NreB functions as a direct oxygen sensor histidine kinase which is autophosphorylated, in the absence of oxygen, probably at the conserved histidine residue, and transfers its phosphate group probably to a conserved aspartate residue of NreC. NreB/NreC activates the expression of the nitrate (narGHJI) and nitrite (nir) reductase operons, as well as the putative nitrate transporter gene narT. The chain is Oxygen sensor histidine kinase NreB (nreB) from Staphylococcus epidermidis (strain ATCC 12228 / FDA PCI 1200).